Consider the following 192-residue polypeptide: Ion-translocating oxidoreductase complex subunit B (192 aa).

The tract at residues 1-26 is hydrophobic; sequence MNTIWIAVGALTFLGLVFGAILGYAS. The region spanning 32–91 is the 4Fe-4S domain; that stretch reads EDDPVVEKIDAILPQSQCGQCGYPGCRPYAEAVGLQGEKINRCAPGGEAVMLKIADLLNV. [4Fe-4S] cluster contacts are provided by cysteine 49, cysteine 52, cysteine 57, cysteine 74, cysteine 117, cysteine 120, cysteine 123, cysteine 127, cysteine 147, cysteine 150, cysteine 153, and cysteine 157. 2 consecutive 4Fe-4S ferredoxin-type domains span residues 108–137 and 138–167; these read MLAV…GATR and AMHT…LRPV.

Belongs to the 4Fe4S bacterial-type ferredoxin family. RnfB subfamily. As to quaternary structure, the complex is composed of six subunits: RsxA, RsxB, RsxC, RsxD, RsxE and RsxG. It depends on [4Fe-4S] cluster as a cofactor.

It is found in the cell inner membrane. In terms of biological role, part of a membrane-bound complex that couples electron transfer with translocation of ions across the membrane. Required to maintain the reduced state of SoxR. This Salmonella arizonae (strain ATCC BAA-731 / CDC346-86 / RSK2980) protein is Ion-translocating oxidoreductase complex subunit B.